A 488-amino-acid chain; its full sequence is Cysteine desulfurase, mitochondrial (488 aa).

Residues 25–52 (LPKPLATSSSPATNAPNKTSNPKTGELH) are disordered. Positions 30–47 (ATSSSPATNAPNKTSNPK) are enriched in polar residues. Residues 157 to 158 (AT), Asn-237, Gln-265, and 285 to 287 (SSH) each bind pyridoxal 5'-phosphate. Residue Lys-288 is modified to N6-(pyridoxal phosphate)lysine. Pyridoxal 5'-phosphate is bound at residue Thr-325. Cys-412 functions as the Cysteine persulfide intermediate in the catalytic mechanism. Cys-412 is a [2Fe-2S] cluster binding site.

This sequence belongs to the class-V pyridoxal-phosphate-dependent aminotransferase family. NifS/IscS subfamily. Pyridoxal 5'-phosphate is required as a cofactor.

It is found in the mitochondrion. It catalyses the reaction (sulfur carrier)-H + L-cysteine = (sulfur carrier)-SH + L-alanine. Catalyzes the removal of elemental sulfur from cysteine to produce alanine. It supplies the inorganic sulfur for iron-sulfur (Fe-S) clusters. Plays a role in both tRNA-processing and mitochondrial metabolism. Involved in the 2-thio-modification of both 5-carboxymethylaminomethyl-2-thiouridine in mitochondrial tRNAs and 5-methoxycarbonylmethyl-2-thiouridine (mcm5s2U) in cytoplasmic tRNAs. In Candida albicans (strain SC5314 / ATCC MYA-2876) (Yeast), this protein is Cysteine desulfurase, mitochondrial (NFS1).